A 298-amino-acid chain; its full sequence is tRNA dimethylallyltransferase (298 aa).

16 to 23 is a binding site for ATP; the sequence is GPTASGKS. 18 to 23 serves as a coordination point for substrate; the sequence is TASGKS. 2 interaction with substrate tRNA regions span residues 41-44 and 165-169; these read DSMQ and QRIVR.

It belongs to the IPP transferase family. Monomer. Mg(2+) serves as cofactor.

The enzyme catalyses adenosine(37) in tRNA + dimethylallyl diphosphate = N(6)-dimethylallyladenosine(37) in tRNA + diphosphate. Its function is as follows. Catalyzes the transfer of a dimethylallyl group onto the adenine at position 37 in tRNAs that read codons beginning with uridine, leading to the formation of N6-(dimethylallyl)adenosine (i(6)A). In Rhizobium rhizogenes (strain K84 / ATCC BAA-868) (Agrobacterium radiobacter), this protein is tRNA dimethylallyltransferase.